A 326-amino-acid chain; its full sequence is Alkanal monooxygenase beta chain (326 aa).

Belongs to the bacterial luciferase oxidoreductase family. As to quaternary structure, heterodimer of an alpha and a beta chain.

It catalyses the reaction a long-chain fatty aldehyde + FMNH2 + O2 = a long-chain fatty acid + hnu + FMN + H2O + 2 H(+). Its function is as follows. Light-emitting reaction in luminous bacteria. The specific role of the beta subunit is unknown, but it is absolutely required for bioluminescence activity. The sequence is that of Alkanal monooxygenase beta chain (luxB) from Photobacterium leiognathi.